The primary structure comprises 507 residues: MCTKTIPVLWGCFLLWNLYVSSSQTIYPGIKARITQRALDYGVQAGMKMIEQMLKEKKLPDLSGSESLEFLKVDYVNYNFSNIKISAFSFPNTSLAFVPGVGIKALTNHGTANISTDWGFESPLFQDTGGADLFLSGVYFTGIIILTRNDFGHPTLKLQDCYAQLSHAHVSFSGELSVLYNSFAEPMEKPILKNLNEMLCPIIASEVKALNANLSTLEVLTKIDNYTLLDYSLISSPEITENYLDLNLKGVFYPLENLTDPPFSPVPFVLPERSNSMLYIGIAEYFFKSASFAHFTAGVFNVTLSTEEISNHFVQNSQGLGNVLSRIAEIYILSQPFMVRIMATEPPIINLQPGNFTLDIPASIMMLTQPKNSTVETIVSMDFVASTSVGLVILGQRLVCSLSLNRFRLALPESNRSNIEVLRFENILSSILHFGVLPLANAKLQQGFPLSNPHKFLFVNSDIEVLEGFLLISTDLKYETSSKQQPSFHVWEGLNLISRQWRGKSAP.

The signal sequence occupies residues 1 to 23; that stretch reads MCTKTIPVLWGCFLLWNLYVSSS. Residues asparagine 79, asparagine 92, and asparagine 113 are each glycosylated (N-linked (GlcNAc...) asparagine). Cysteine 161 and cysteine 200 are joined by a disulfide. Asparagine 213, asparagine 225, asparagine 257, asparagine 301, asparagine 355, asparagine 372, and asparagine 415 each carry an N-linked (GlcNAc...) asparagine glycan.

Belongs to the BPI/LBP/Plunc superfamily. BPI/LBP family. In terms of tissue distribution, detected in the basal layer of the epidermis from inflammatory skin from psoriasis patients, but not in normal skin.

Its subcellular location is the secreted. The polypeptide is BPI fold-containing family C protein (BPIFC) (Homo sapiens (Human)).